The following is a 1406-amino-acid chain: DNA-directed RNA polymerase subunit beta' (1406 aa).

C70, C72, C85, and C88 together coordinate Zn(2+). Mg(2+) contacts are provided by D460, D462, and D464. Residues C814, C888, C895, and C898 each coordinate Zn(2+).

The protein belongs to the RNA polymerase beta' chain family. In terms of assembly, the RNAP catalytic core consists of 2 alpha, 1 beta, 1 beta' and 1 omega subunit. When a sigma factor is associated with the core the holoenzyme is formed, which can initiate transcription. Requires Mg(2+) as cofactor. It depends on Zn(2+) as a cofactor.

It catalyses the reaction RNA(n) + a ribonucleoside 5'-triphosphate = RNA(n+1) + diphosphate. Functionally, DNA-dependent RNA polymerase catalyzes the transcription of DNA into RNA using the four ribonucleoside triphosphates as substrates. In Photorhabdus laumondii subsp. laumondii (strain DSM 15139 / CIP 105565 / TT01) (Photorhabdus luminescens subsp. laumondii), this protein is DNA-directed RNA polymerase subunit beta'.